A 1946-amino-acid polypeptide reads, in one-letter code: Sickle tail protein (1946 aa).

2 disordered regions span residues 1-83 (MEES…GMQP) and 113-176 (ERLR…VRSA). Polar residues predominate over residues 18-36 (DSRQMPQQGRSNLHVTSQE). The span at 38–47 (AACRRPRERL) shows a compositional bias: basic and acidic residues. Residue Ser169 is modified to Phosphoserine. Tyr244 carries the phosphotyrosine modification. 2 disordered regions span residues 305–324 (HPPH…HSLP) and 339–374 (AIPG…RDVK). A compositionally biased stretch (pro residues) spans 308 to 324 (HVIPNSPPSTPVPHSLP). Over residues 352 to 367 (SSLPVSRSISPSPSAI) the composition is skewed to low complexity. Ser357 carries O-linked (GlcNAc) serine glycosylation. Ser361 and Ser365 each carry phosphoserine. Position 393 is a phosphotyrosine (Tyr393). The disordered stretch occupies residues 455-512 (SRKYPDSHLPTLGSKTPPASPHRVGDLRMIDLHPHLNTHGPPHTLQPDRASPSRQSFK). Position 470 is a phosphothreonine (Thr470). Ser474 carries the post-translational modification Phosphoserine. The segment covering 477 to 488 (RVGDLRMIDLHP) has biased composition (basic and acidic residues). Coiled-coil stretches lie at residues 557–581 (RETR…QSAL) and 644–685 (TSLL…ELEI). The residue at position 809 (Ser809) is a Phosphoserine. Disordered regions lie at residues 853–875 (EETA…DVKS) and 891–947 (SPVV…PVNG). Polar residues-rich tracts occupy residues 891–909 (SPVV…NPAQ) and 927–947 (QEVT…PVNG). Positions 962-990 (SAKNRAVSIEKAEKKWEEKRQNLEHYNGK) form a coiled coil. Residues 1008–1221 (PNLEMPPASS…LRPSGPPKWE (214 aa)) form a disordered region. Ser1032, Ser1035, Ser1038, and Ser1049 each carry phosphoserine. Residues 1049–1058 (SPPPPPPPPR) are compositionally biased toward pro residues. Positions 1151–1162 (NPNSHAEQSRAN) are enriched in polar residues. Residues 1176–1194 (PKEKKNLEFYHEDVRKSDV) are compositionally biased toward basic and acidic residues. Ser1466 is subject to Phosphoserine. Residues 1469–1495 (FEECDEELERMLTEEKIEEEEEDENED) adopt a coiled-coil conformation. 3 disordered regions span residues 1482–1567 (EEKI…VDDQ), 1622–1664 (AKRF…RKST), and 1691–1946 (VDTS…KETS). The span at 1484-1495 (KIEEEEEDENED) shows a compositional bias: acidic residues. Residues 1498–1508 (VRTSSQMSCEQ) are compositionally biased toward polar residues. Composition is skewed to basic and acidic residues over residues 1509–1518 (VDSRSDRMGQ) and 1622–1644 (AKRF…RRQE). A coiled-coil region spans residues 1659–1688 (EIRKSTYRTLDSLEQTIKQLENTISEMSPR). Residues 1739–1759 (KGSSTTPQTSRMPVPMTSKNR) show a composition bias toward polar residues. At Ser1741 the chain carries Phosphoserine. The span at 1765 to 1777 (KASKQSKLQDPRQ) shows a compositional bias: basic and acidic residues. Residues 1806 to 1825 (ALSPSSGKSSSLPSASGDSS) show a composition bias toward low complexity. Ser1843 bears the Phosphoserine mark. The span at 1851 to 1866 (HSASLIPSVSNGSLKF) shows a compositional bias: polar residues. Low complexity predominate over residues 1890-1899 (AAPTTSSSSS). Phosphoserine is present on residues Ser1899, Ser1902, and Ser1905. The span at 1920 to 1946 (HTPSLASYKAQNGSSSKATPSTAKETS) shows a compositional bias: polar residues.

As to quaternary structure, interacts with CPNE4 (via VWFA domain). Expressed predominantly in the notochord and mesonephros during embryogenesis as well as in other areas such as the epithalamus sulcus, lens vesicle, inner retinal layer, heart, hepatic primordial surface, infundibulum, surface ectoderm, hind gut and limb bud mesenchyme. In adults, expressed in a range of tissues including the nucleus pulposus, corpus callosum, kidney, cardiac muscle, Sertoli cells and hair follicles.

Its subcellular location is the cytoplasm. It is found in the cytoskeleton. The protein localises to the microtubule organizing center. The protein resides in the centrosome. Required for normal development of intervertebral disks. The polypeptide is Sickle tail protein (Mus musculus (Mouse)).